The sequence spans 239 residues: Small ribosomal subunit protein uS2c (239 aa).

The protein belongs to the universal ribosomal protein uS2 family.

The protein localises to the plastid. The polypeptide is Small ribosomal subunit protein uS2c (rps2) (Aneura mirabilis (Parasitic liverwort)).